Here is a 218-residue protein sequence, read N- to C-terminus: Large ribosomal subunit protein mL54 (218 aa).

Belongs to the mitochondrion-specific ribosomal protein mL54 family. Component of the mitochondrial large ribosomal subunit (mt-LSU). Mature N.crassa 74S mitochondrial ribosomes consist of a small (37S) and a large (54S) subunit. The 37S small subunit contains a 16S ribosomal RNA (16S mt-rRNA) and 32 different proteins. The 54S large subunit contains a 23S rRNA (23S mt-rRNA) and 42 different proteins.

It is found in the mitochondrion. Functionally, component of the mitochondrial ribosome (mitoribosome), a dedicated translation machinery responsible for the synthesis of mitochondrial genome-encoded proteins, including at least some of the essential transmembrane subunits of the mitochondrial respiratory chain. The mitoribosomes are attached to the mitochondrial inner membrane and translation products are cotranslationally integrated into the membrane. In Neurospora crassa (strain ATCC 24698 / 74-OR23-1A / CBS 708.71 / DSM 1257 / FGSC 987), this protein is Large ribosomal subunit protein mL54 (mrpl37).